Here is a 386-residue protein sequence, read N- to C-terminus: Dual-specificity RNA methyltransferase RlmN (386 aa).

Catalysis depends on Glu-96, which acts as the Proton acceptor. Positions 102 to 340 constitute a Radical SAM core domain; the sequence is ENDRATLCVS…VITRRTRGED (239 aa). Cys-109 and Cys-345 are disulfide-bonded. [4Fe-4S] cluster-binding residues include Cys-116, Cys-120, and Cys-123. S-adenosyl-L-methionine is bound by residues 170-171, Ser-202, 224-226, and Asn-302; these read GE and SIH. The active-site S-methylcysteine intermediate is the Cys-345.

Belongs to the radical SAM superfamily. RlmN family. [4Fe-4S] cluster is required as a cofactor.

Its subcellular location is the cytoplasm. The enzyme catalyses adenosine(2503) in 23S rRNA + 2 reduced [2Fe-2S]-[ferredoxin] + 2 S-adenosyl-L-methionine = 2-methyladenosine(2503) in 23S rRNA + 5'-deoxyadenosine + L-methionine + 2 oxidized [2Fe-2S]-[ferredoxin] + S-adenosyl-L-homocysteine. It catalyses the reaction adenosine(37) in tRNA + 2 reduced [2Fe-2S]-[ferredoxin] + 2 S-adenosyl-L-methionine = 2-methyladenosine(37) in tRNA + 5'-deoxyadenosine + L-methionine + 2 oxidized [2Fe-2S]-[ferredoxin] + S-adenosyl-L-homocysteine. Functionally, specifically methylates position 2 of adenine 2503 in 23S rRNA and position 2 of adenine 37 in tRNAs. m2A2503 modification seems to play a crucial role in the proofreading step occurring at the peptidyl transferase center and thus would serve to optimize ribosomal fidelity. The sequence is that of Dual-specificity RNA methyltransferase RlmN from Colwellia psychrerythraea (strain 34H / ATCC BAA-681) (Vibrio psychroerythus).